A 175-amino-acid chain; its full sequence is ATP synthase subunit b (175 aa).

The chain crosses the membrane as a helical span at residues 18-38 (VTSWEPFVANLIAFILMVVIL).

The protein belongs to the ATPase B chain family. As to quaternary structure, F-type ATPases have 2 components, F(1) - the catalytic core - and F(0) - the membrane proton channel. F(1) has five subunits: alpha(3), beta(3), gamma(1), delta(1), epsilon(1). F(0) has three main subunits: a(1), b(2) and c(10-14). The alpha and beta chains form an alternating ring which encloses part of the gamma chain. F(1) is attached to F(0) by a central stalk formed by the gamma and epsilon chains, while a peripheral stalk is formed by the delta and b chains.

Its subcellular location is the cell inner membrane. F(1)F(0) ATP synthase produces ATP from ADP in the presence of a proton or sodium gradient. F-type ATPases consist of two structural domains, F(1) containing the extramembraneous catalytic core and F(0) containing the membrane proton channel, linked together by a central stalk and a peripheral stalk. During catalysis, ATP synthesis in the catalytic domain of F(1) is coupled via a rotary mechanism of the central stalk subunits to proton translocation. In terms of biological role, component of the F(0) channel, it forms part of the peripheral stalk, linking F(1) to F(0). The chain is ATP synthase subunit b from Akkermansia muciniphila (strain ATCC BAA-835 / DSM 22959 / JCM 33894 / BCRC 81048 / CCUG 64013 / CIP 107961 / Muc).